The following is a 424-amino-acid chain: Glutamyl-tRNA reductase (424 aa).

Substrate is bound by residues 49-52 (TCNR), Ser105, 110-112 (EPQ), and Gln116. The active-site Nucleophile is Cys50. 185–190 (GSGETA) contacts NADP(+).

This sequence belongs to the glutamyl-tRNA reductase family. As to quaternary structure, homodimer.

The enzyme catalyses (S)-4-amino-5-oxopentanoate + tRNA(Glu) + NADP(+) = L-glutamyl-tRNA(Glu) + NADPH + H(+). It participates in porphyrin-containing compound metabolism; protoporphyrin-IX biosynthesis; 5-aminolevulinate from L-glutamyl-tRNA(Glu): step 1/2. Its function is as follows. Catalyzes the NADPH-dependent reduction of glutamyl-tRNA(Glu) to glutamate 1-semialdehyde (GSA). The sequence is that of Glutamyl-tRNA reductase from Legionella pneumophila (strain Corby).